A 213-amino-acid chain; its full sequence is MSERSVSKRTEQKRWYTVQAPEQFDREVLGKTPAEEPDKVLGRTIETTLGELTNDASENNTKLTFKINEVASDSAYTEFIRHELTRDYLRSLVRRGSSKVEAYITVLTTDDYRVQIQPVAVTTKKADASQEKAIRRTMIDLVRETAEDHTFEQLIDSVVEGRLSSAIYGEAKDIYPLRRVEIKKTTLEARPEEVAAEEETAVDVDEEDVDVEA.

The segment at 189 to 213 is disordered; sequence ARPEEVAAEEETAVDVDEEDVDVEA. Residues 194–213 are compositionally biased toward acidic residues; that stretch reads VAAEEETAVDVDEEDVDVEA.

Belongs to the eukaryotic ribosomal protein eS1 family.

The polypeptide is Small ribosomal subunit protein eS1 (Haloarcula marismortui (strain ATCC 43049 / DSM 3752 / JCM 8966 / VKM B-1809) (Halobacterium marismortui)).